A 307-amino-acid chain; its full sequence is Alginate lyase (307 aa).

The N-terminal stretch at 1 to 20 (MLKSGVMVASLCLFSVPSRA) is a signal peptide.

This sequence belongs to the polysaccharide lyase 7 family.

It is found in the secreted. It catalyses the reaction Eliminative cleavage of alginate to give oligosaccharides with 4-deoxy-alpha-L-erythro-hex-4-enuronosyl groups at their non-reducing ends and beta-D-mannuronate at their reducing end.. Its function is as follows. Degrades alginates that contain guluronic acid. The protein is Alginate lyase (alyA) of Klebsiella pneumoniae.